We begin with the raw amino-acid sequence, 285 residues long: 2-dehydro-3-deoxyphosphooctonate aldolase (285 aa).

This sequence belongs to the KdsA family.

The protein localises to the cytoplasm. It carries out the reaction D-arabinose 5-phosphate + phosphoenolpyruvate + H2O = 3-deoxy-alpha-D-manno-2-octulosonate-8-phosphate + phosphate. The protein operates within carbohydrate biosynthesis; 3-deoxy-D-manno-octulosonate biosynthesis; 3-deoxy-D-manno-octulosonate from D-ribulose 5-phosphate: step 2/3. Its pathway is bacterial outer membrane biogenesis; lipopolysaccharide biosynthesis. In Variovorax paradoxus (strain S110), this protein is 2-dehydro-3-deoxyphosphooctonate aldolase.